Here is a 331-residue protein sequence, read N- to C-terminus: Probable tRNA pseudouridine synthase B (331 aa).

A compositionally biased stretch (basic and acidic residues) spans 1–15 (MRCSQREVFVKREEP). The segment at 1-27 (MRCSQREVFVKREEPTNPEWGKPPSQR) is disordered. Asp-71 serves as the catalytic Nucleophile. Residues 238–313 (LPKIWVRDSA…AVVRTDRVVM (76 aa)) form the PUA domain.

This sequence belongs to the pseudouridine synthase TruB family. Type 2 subfamily.

The enzyme catalyses uridine(55) in tRNA = pseudouridine(55) in tRNA. Its function is as follows. Could be responsible for synthesis of pseudouridine from uracil-55 in the psi GC loop of transfer RNAs. This chain is Probable tRNA pseudouridine synthase B, found in Pyrobaculum arsenaticum (strain DSM 13514 / JCM 11321 / PZ6).